Consider the following 928-residue polypeptide: Calcium-transporting ATPase 1 (928 aa).

Residues 1–25 (MDSHTSTEGVPLSETNNRSHATPSA) are disordered. A run of 4 helical transmembrane segments spans residues 81-101 (FSEN…FFMG), 105-125 (DAIS…VQEY), 271-291 (DLSL…MFQG), and 306-326 (VAAI…LGVL). Asp-353 functions as the 4-aspartylphosphate intermediate in the catalytic mechanism. 5 helical membrane passes run 718–738 (FITF…VATI), 750–770 (ILWI…VEPV), 799–819 (AVII…DGVI), 860–880 (FLYA…VPFL), and 887–907 (EALS…VWIL).

This sequence belongs to the cation transport ATPase (P-type) (TC 3.A.3) family.

Its subcellular location is the golgi apparatus membrane. It catalyses the reaction Ca(2+)(in) + ATP + H2O = Ca(2+)(out) + ADP + phosphate + H(+). In terms of biological role, this magnesium-dependent enzyme catalyzes the hydrolysis of ATP coupled with the transport of calcium. Has a role in the secretory pathway. The protein is Calcium-transporting ATPase 1 (PMR1) of Yarrowia lipolytica (strain CLIB 122 / E 150) (Yeast).